Reading from the N-terminus, the 135-residue chain is T-cell receptor gamma chain V region V108A (135 aa).

An N-terminal signal peptide occupies residues 1–18 (MLLLRWFTSCCLWVFGLG). The tract at residues 19–116 (QLEQTELSVT…EATYYCAVWM (98 aa)) is v segment. Residues 117–135 (RWSSGFHKVFAEGTKLIVI) are j segment.

This chain is T-cell receptor gamma chain V region V108A, found in Mus musculus (Mouse).